Reading from the N-terminus, the 1398-residue chain is MASTSSFRASSSSSTPSIPRTTTYDVFLSFRGEDTRYNFTDHLYSALGRRGIRTFRDDRLRRGEAIAPELLKAIEESRSSVIVFSENYAHSRWCLDELVKIMECQKDLGHAVFPIFYHVDPSHVRKQEGSFGEAFAGYEENWKDKIPRWRTALTEAANLSGWHLLDDRYESNQIKEITNSIFRQLKCKRLDVGANLVGIDSHVKEMILRLHLESSDVRMVGIYGVGGIGKTTIAKVIYNELSCEFEYMSFLENIREGSNPQVLFHLQNQLLGDILEGEGSQNISSVAHRASMIKDILLSRRVFIVLDDVDDLSQLEYLLGHREWLGEGSRVIITTRNKHVLAVQEVDDLYEVEGLNFEEACELFSLYAFKQNLPKSDYRNLTCRVVGYCQGLPLALKVLGSLLCKKTIPQWEGELKKLDSEPKADIHKVLKRSYDGLDRIDKNIFLDLACFFKGEGRDFVLRILDGCDFPAETGISNLNDLCLITLPYNQICMHDLIQQMGWEIVRENFPVEPNKWSRLWDPCDFERALTADEGIKSVETMSLDLSKLKRVCSNSNVFAKMTKLRLLKVYSSSDIDSAHGDSDEDIEEVYDVVMKDASKMQLGQSFKFPSYELRYLRWDGYPLDSLPLNFDGGKLVELHLKCSNIKQLWQGHKDLERLKVIDLSYSRKLSQMSEFSSMPNLERLCLSGCVSLIDIHPSVGNMKKLTTLSLRSCNKLKNLPDSIGDLESLESLYLSNCSKFEKFPEKGGNMKSLTELDLKNTAIKDLPDSIGDLESLESLYLSNCSKFEKFPEKGGNMKSLTELDLKNTAIKDLPDSIGDLESLEILNLSDCAKFEKFPEKGGNMKSLKELDLQNTAIKDLPDSIGDLKSLKYLSLSDCSKFEKFPEKGGNMKRLLQLILSNTAIKDLPDSIGDLESLKYLYLSDCSKFEKFPEKGGNMKSLTELDLKNTAIKDLPDSIGDLESLEILNLSDCAKFEKFPEKGGNMKSLKELDLQNTAIKDLPDSIGDLESLKYLYLSDCSKFEKFPEKGGNMKSLLQLILSNTAIKDLPDSIGDLESLEYLHLSVCSKFEKFPEKGGNMKSLRELGLRNTAIKDLPDSIGDLESLEMLSLSNCPKFEVLPLSLKAIDAHLCTSKEDLSRLLWLCHRNWLKSTTEEFDRWQLSAFIPESSGIPEWITYQNLGSEVTEKLPINWCEDPDFPGFVLSCVYRPSCDYSSAYIFCHDFKCELNLHGNGFRFRDVCYHECWCDCHVNFKDSRDLVCVYWYPKTAIPEEDHHKYTHINASFKSDEVKIKKCGINVIFLGDQRNHMPMLEHPQNSGDNGSALQDANGNVHGANQDDEHYHIPLLDLLRNLSLGDNGSVVLEDTLGNRKRRRNDSLPDVVEEPLYKRLGGPHTEISL.

A TIR domain is found at 22 to 185 (TTYDVFLSFR…EITNSIFRQL (164 aa)). NAD(+)-binding positions include 31-36 (RGEDTR) and Gly-63. The active site involves Glu-97. One can recognise an NB-ARC domain in the interval 201–440 (SHVKEMILRL…KRSYDGLDRI (240 aa)). LRR repeat units follow at residues 203 to 225 (VKEMILRLHLESSDVRMVGIYGV), 423 to 447 (KADIHKVLKRSYDGLDRIDKNIFLD), 478 to 504 (LNDLCLITLPYNQICMHDLIQQMGWEI), 535 to 560 (IKSVETMSLDLSKLKRVCSNSNVFAK), 610 to 632 (SYELRYLRWDGYPLDSLPLNFDG), 633 to 657 (GKLVELHLKCSNIKQLWQGHKDLER), 678 to 702 (MPNLERLCLSGCVSLIDIHPSVGNM), 703 to 726 (KKLTTLSLRSCNKLKNLPDSIGDL), 728 to 750 (SLESLYLSNCSKFEKFPEKGGNM), 751 to 773 (KSLTELDLKNTAIKDLPDSIGDL), 775 to 797 (SLESLYLSNCSKFEKFPEKGGNM), 798 to 820 (KSLTELDLKNTAIKDLPDSIGDL), 822 to 844 (SLEILNLSDCAKFEKFPEKGGNM), 845 to 867 (KSLKELDLQNTAIKDLPDSIGDL), 869 to 891 (SLKYLSLSDCSKFEKFPEKGGNM), 892 to 914 (KRLLQLILSNTAIKDLPDSIGDL), 916 to 938 (SLKYLYLSDCSKFEKFPEKGGNM), 939 to 961 (KSLTELDLKNTAIKDLPDSIGDL), 963 to 985 (SLEILNLSDCAKFEKFPEKGGNM), 986 to 1008 (KSLKELDLQNTAIKDLPDSIGDL), 1010 to 1032 (SLKYLYLSDCSKFEKFPEKGGNM), 1033 to 1055 (KSLLQLILSNTAIKDLPDSIGDL), 1079 to 1102 (MKSLRELGLRNTAIKDLPDSIGDL), and 1105 to 1128 (LEMLSLSNCPKFEVLPLSLKAIDA). Residues 1315 to 1328 (QNSGDNGSALQDAN) show a composition bias toward polar residues. Residues 1315 to 1336 (QNSGDNGSALQDANGNVHGANQ) are disordered. One copy of the LRR 25 repeat lies at 1346-1369 (LDLLRNLSLGDNGSVVLEDTLGNR). A Nuclear localization signal motif is present at residues 1369–1373 (RKRRR).

The protein belongs to the disease resistance TIR-NB-LRR family. As to quaternary structure, homodimer; homodimerization is required for NAD(+) hydrolase (NADase) activity.

The protein resides in the nucleus. It localises to the cytoplasm. The catalysed reaction is NAD(+) + H2O = ADP-D-ribose + nicotinamide + H(+). Its function is as follows. Disease resistance (R) protein that confers resistance to multiple powdery and downy mildew by promoting cell death. Acts as a NAD(+) hydrolase (NADase): in response to activation, catalyzes cleavage of NAD(+) into ADP-D-ribose (ADPR) and nicotinamide; NAD(+) cleavage triggering a defense system that promotes cell death. The protein is Disease resistance protein RPV1 of Vitis rotundifolia (Muscadine grape).